Here is a 130-residue protein sequence, read N- to C-terminus: Con-Ins M1 (130 aa).

The signal sequence occupies residues 1–21 (MTTSSYFLLVALGLLLYVCQS). Disulfide bonds link Cys29-Cys107, Cys41-Cys110, Cys53-Cys123, and Cys109-Cys114. Pro34 is subject to 4-hydroxyproline; partial. Positions 59-92 (AHGGTNDARATTGRALSLSKRRGFLSMLKRRGKR) are cleaved as a propeptide — c peptide. At Glu118 the chain carries 4-carboxyglutamate; partial. Ser129 is subject to Serine amide.

It belongs to the insulin family. Heterodimer of A and B chains; disulfide-linked. Expressed by the venom gland.

The protein resides in the secreted. This venom insulin facilitates prey capture by rapidly inducing hypoglycemic shock. Intraperitoneal injection of this peptide into zebrafish lowers blood glucose with the same potency than human insulin. In vivo, when applied to water, this peptide reduces overall locomotor activity of zebrafish larvae, observed as a significant decrease in the percentage of time spent swimming and movement frequency. This is Con-Ins M1 from Conus marmoreus (Marble cone).